The following is a 93-amino-acid chain: Small ribosomal subunit protein uS19c (93 aa).

This sequence belongs to the universal ribosomal protein uS19 family.

The protein resides in the plastid. It localises to the chloroplast. In terms of biological role, protein S19 forms a complex with S13 that binds strongly to the 16S ribosomal RNA. The chain is Small ribosomal subunit protein uS19c from Brachypodium distachyon (Purple false brome).